The sequence spans 676 residues: Protein TAPT1 homolog (676 aa).

The tract at residues 1-44 is disordered; that stretch reads MNATLNSAGGKRQLRFRGDVTGSRVEELHHQQQEEQKQKAPLAQ. A compositionally biased stretch (basic and acidic residues) spans 24–38; the sequence is RVEELHHQQQEEQKQ. The next 6 helical transmembrane spans lie at 128-148, 170-190, 249-269, 346-366, 414-434, and 437-457; these read SFLY…WALV, EICD…MLLV, VLTH…LIMF, FCVM…IDWV, GFIP…AVSF, and LAAW…RICL. The segment at 625 to 676 is disordered; it reads SGDGVTSAKAKKATQRLPKRTHKRSESEPGMPSMVEKGGAAGIAGGNQTTQL. Basic residues predominate over residues 633 to 647; the sequence is KAKKATQRLPKRTHK.

It belongs to the TAPT1 family.

It is found in the membrane. The polypeptide is Protein TAPT1 homolog (Drosophila melanogaster (Fruit fly)).